The primary structure comprises 355 residues: Peptide chain release factor 1 (355 aa).

Gln-233 is subject to N5-methylglutamine. Residues 282–293 (RKKEQARADSRR) show a composition bias toward basic and acidic residues. Residues 282–305 (RKKEQARADSRRGQVGSGDRSERI) form a disordered region.

Belongs to the prokaryotic/mitochondrial release factor family. Methylated by PrmC. Methylation increases the termination efficiency of RF1.

It localises to the cytoplasm. Its function is as follows. Peptide chain release factor 1 directs the termination of translation in response to the peptide chain termination codons UAG and UAA. This is Peptide chain release factor 1 from Rickettsia rickettsii (strain Iowa).